Consider the following 364-residue polypeptide: Chorismate synthase (364 aa).

R47 provides a ligand contact to NADP(+). FMN contacts are provided by residues 125-127 (RFS), G285, 300-304 (KPTPS), and R327.

The protein belongs to the chorismate synthase family. As to quaternary structure, homotetramer. The cofactor is FMNH2.

The enzyme catalyses 5-O-(1-carboxyvinyl)-3-phosphoshikimate = chorismate + phosphate. The protein operates within metabolic intermediate biosynthesis; chorismate biosynthesis; chorismate from D-erythrose 4-phosphate and phosphoenolpyruvate: step 7/7. Catalyzes the anti-1,4-elimination of the C-3 phosphate and the C-6 proR hydrogen from 5-enolpyruvylshikimate-3-phosphate (EPSP) to yield chorismate, which is the branch point compound that serves as the starting substrate for the three terminal pathways of aromatic amino acid biosynthesis. This reaction introduces a second double bond into the aromatic ring system. The chain is Chorismate synthase from Dehalococcoides mccartyi (strain ATCC BAA-2266 / KCTC 15142 / 195) (Dehalococcoides ethenogenes (strain 195)).